The following is a 217-amino-acid chain: UPF0502 protein VFMJ11_A0613 (217 aa).

The protein belongs to the UPF0502 family.

The chain is UPF0502 protein VFMJ11_A0613 from Aliivibrio fischeri (strain MJ11) (Vibrio fischeri).